Consider the following 169-residue polypeptide: Ribosome-binding factor A (169 aa).

The segment at 124 to 169 is disordered; sequence AGAKHAGDADPYKSDIPEDVEIDEDDFDEEDEDLIDDEELDEDGNK. The span at 128 to 139 shows a compositional bias: basic and acidic residues; it reads HAGDADPYKSDI. Positions 140 to 169 are enriched in acidic residues; sequence PEDVEIDEDDFDEEDEDLIDDEELDEDGNK.

The protein belongs to the RbfA family. As to quaternary structure, monomer. Binds 30S ribosomal subunits, but not 50S ribosomal subunits or 70S ribosomes.

Its subcellular location is the cytoplasm. Functionally, one of several proteins that assist in the late maturation steps of the functional core of the 30S ribosomal subunit. Associates with free 30S ribosomal subunits (but not with 30S subunits that are part of 70S ribosomes or polysomes). Required for efficient processing of 16S rRNA. May interact with the 5'-terminal helix region of 16S rRNA. This Arthrobacter sp. (strain FB24) protein is Ribosome-binding factor A.